The following is an 89-amino-acid chain: MAISQAKKNEIIKQYARHEGDTGSTEVQVAVLTADINEINVHMQEHRKDFHSQRGLMKKIGHRRNLLAYLRKTDVQRYRELIKSLGLRR.

The protein belongs to the universal ribosomal protein uS15 family. As to quaternary structure, part of the 30S ribosomal subunit. Forms a bridge to the 50S subunit in the 70S ribosome, contacting the 23S rRNA.

Its function is as follows. One of the primary rRNA binding proteins, it binds directly to 16S rRNA where it helps nucleate assembly of the platform of the 30S subunit by binding and bridging several RNA helices of the 16S rRNA. In terms of biological role, forms an intersubunit bridge (bridge B4) with the 23S rRNA of the 50S subunit in the ribosome. The chain is Small ribosomal subunit protein uS15 from Levilactobacillus brevis (strain ATCC 367 / BCRC 12310 / CIP 105137 / JCM 1170 / LMG 11437 / NCIMB 947 / NCTC 947) (Lactobacillus brevis).